The chain runs to 218 residues: Small ribosomal subunit protein uS3c (218 aa).

One can recognise a KH type-2 domain in the interval 47-120; it reads VRTHIKSSSN…KLHIAIEKVA (74 aa).

Belongs to the universal ribosomal protein uS3 family. In terms of assembly, part of the 30S ribosomal subunit.

Its subcellular location is the plastid. The protein localises to the chloroplast. This Picea abies (Norway spruce) protein is Small ribosomal subunit protein uS3c (rps3).